Consider the following 264-residue polypeptide: MKSKLKLHGFNNLTKTLSFNIYDICYAETPQDQQAYVEYINSVYDAERLTRILTDVVDIIGANILNIARQDYDPQGASVTILISEQPVTPTESQIEESPGPLPETILAHLDKSHITVHTYPEIHPVDGIATFRVDIDVSTCGVISPLKALNYLIHKFESDIVTVDYRVRGFTRDVEGKKHFIDHEINSIQNYLSEDTRNGYQMTDVNVYQENLFHTKMLLKQFELDNYLFGDATSNLSPEQREQVTAKVKHEMLEIFYGRNVAV.

The active-site Schiff-base intermediate with substrate; via pyruvic acid is Ser-113. Ser-113 carries the pyruvic acid (Ser); by autocatalysis modification. His-118 (proton acceptor; for processing activity) is an active-site residue. Cys-141 serves as the catalytic Proton donor; for catalytic activity.

Belongs to the prokaryotic AdoMetDC family. Type 2 subfamily. As to quaternary structure, heterooctamer of four alpha and four beta chains arranged as a tetramer of alpha/beta heterodimers. Pyruvate is required as a cofactor. In terms of processing, is synthesized initially as an inactive proenzyme. Formation of the active enzyme involves a self-maturation process in which the active site pyruvoyl group is generated from an internal serine residue via an autocatalytic post-translational modification. Two non-identical subunits are generated from the proenzyme in this reaction, and the pyruvate is formed at the N-terminus of the alpha chain, which is derived from the carboxyl end of the proenzyme. The post-translation cleavage follows an unusual pathway, termed non-hydrolytic serinolysis, in which the side chain hydroxyl group of the serine supplies its oxygen atom to form the C-terminus of the beta chain, while the remainder of the serine residue undergoes an oxidative deamination to produce ammonia and the pyruvoyl group blocking the N-terminus of the alpha chain.

The enzyme catalyses S-adenosyl-L-methionine + H(+) = S-adenosyl 3-(methylsulfanyl)propylamine + CO2. It participates in amine and polyamine biosynthesis; S-adenosylmethioninamine biosynthesis; S-adenosylmethioninamine from S-adenosyl-L-methionine: step 1/1. Its function is as follows. Catalyzes the decarboxylation of S-adenosylmethionine to S-adenosylmethioninamine (dcAdoMet), the propylamine donor required for the synthesis of the polyamines spermine and spermidine from the diamine putrescine. This chain is S-adenosylmethionine decarboxylase proenzyme, found in Pseudomonas syringae pv. syringae (strain B728a).